The primary structure comprises 93 residues: Guanine nucleotide-binding protein subunit gamma (93 aa).

Residues 1 to 22 (MPQYASRDVGDPSQIKKNKQSM) form a disordered region. A lipid anchor (S-palmitoyl cysteine) is attached at Cys89. Residue Cys90 is modified to Cysteine methyl ester. Cys90 is lipidated: S-farnesyl cysteine. A propeptide spans 91 to 93 (VVM) (removed in mature form).

It belongs to the G protein gamma family. G proteins are composed of 3 units, alpha, beta and gamma.

It localises to the membrane. The polypeptide is Guanine nucleotide-binding protein subunit gamma (gng-1) (Neurospora crassa (strain ATCC 24698 / 74-OR23-1A / CBS 708.71 / DSM 1257 / FGSC 987)).